Consider the following 152-residue polypeptide: Deoxyuridine 5'-triphosphate nucleotidohydrolase (152 aa).

Residues 71 to 73, asparagine 84, 88 to 90, and methionine 98 each bind substrate; these read RSG and LID.

The protein belongs to the dUTPase family. Requires Mg(2+) as cofactor.

The enzyme catalyses dUTP + H2O = dUMP + diphosphate + H(+). The protein operates within pyrimidine metabolism; dUMP biosynthesis; dUMP from dCTP (dUTP route): step 2/2. In terms of biological role, this enzyme is involved in nucleotide metabolism: it produces dUMP, the immediate precursor of thymidine nucleotides and it decreases the intracellular concentration of dUTP so that uracil cannot be incorporated into DNA. The chain is Deoxyuridine 5'-triphosphate nucleotidohydrolase from Salmonella agona (strain SL483).